The primary structure comprises 382 residues: Histidinol-phosphate aminotransferase (382 aa).

Residues 1–28 (MTSAPRPRPTLDDLPLREDLRGKSPYGA) are disordered. The span at 9 to 22 (PTLDDLPLREDLRG) shows a compositional bias: basic and acidic residues. Residue K233 is modified to N6-(pyridoxal phosphate)lysine.

It belongs to the class-II pyridoxal-phosphate-dependent aminotransferase family. Histidinol-phosphate aminotransferase subfamily. Homodimer. Pyridoxal 5'-phosphate is required as a cofactor.

It catalyses the reaction L-histidinol phosphate + 2-oxoglutarate = 3-(imidazol-4-yl)-2-oxopropyl phosphate + L-glutamate. Its pathway is amino-acid biosynthesis; L-histidine biosynthesis; L-histidine from 5-phospho-alpha-D-ribose 1-diphosphate: step 7/9. The chain is Histidinol-phosphate aminotransferase from Mycobacterium marinum (strain ATCC BAA-535 / M).